The sequence spans 205 residues: Heat shock protein beta-11 (205 aa).

A sHSP domain is found at 67 to 180 (VSPMTTFKPI…NERVIPITYT (114 aa)). Residues 184–205 (KNPALQNSEPENQAVEAEAAEN) form a disordered region. The segment covering 192 to 205 (EPENQAVEAEAAEN) has biased composition (low complexity).

Belongs to the small heat shock protein (HSP20) family. As to expression, expressed specifically in the rostral-most somites at 24 hpf. At 48 hpf, expression continues in the rostral-most somites and also in the notochord. Somite expression was restricted to the vicinity of the horizontal myoseptum. In adults, expressed in the heart.

This is Heat shock protein beta-11 (hspb11) from Danio rerio (Zebrafish).